The primary structure comprises 98 residues: Large ribosomal subunit protein uL23 (98 aa).

This sequence belongs to the universal ribosomal protein uL23 family. Part of the 50S ribosomal subunit. Contacts protein L29, and trigger factor when it is bound to the ribosome.

One of the early assembly proteins it binds 23S rRNA. One of the proteins that surrounds the polypeptide exit tunnel on the outside of the ribosome. Forms the main docking site for trigger factor binding to the ribosome. In Ruegeria sp. (strain TM1040) (Silicibacter sp.), this protein is Large ribosomal subunit protein uL23.